Here is a 437-residue protein sequence, read N- to C-terminus: Purple acid phosphatase 18 (437 aa).

Positions 1–23 (MEKWGILLLVTLSVSIIFTSAAA) are cleaved as a signal peptide. Fe cation contacts are provided by Asp148, Asp175, and Tyr178. A Zn(2+)-binding site is contributed by Asp175. Zn(2+) is bound by residues Asn208 and His291. Asn208 is a substrate binding site. The active-site Proton donor is the His301. His328 is a Zn(2+) binding site. Residue 328–330 (HVH) coordinates substrate. His330 contacts Fe cation. Residue Asn390 is glycosylated (N-linked (GlcNAc...) asparagine).

Belongs to the metallophosphoesterase superfamily. Purple acid phosphatase family. In terms of assembly, homodimer. Requires Fe cation as cofactor. It depends on Zn(2+) as a cofactor. As to expression, expressed in roots, stems, leaves, flowers and siliques.

Its subcellular location is the secreted. It catalyses the reaction a phosphate monoester + H2O = an alcohol + phosphate. The sequence is that of Purple acid phosphatase 18 (PAP18) from Arabidopsis thaliana (Mouse-ear cress).